Here is a 280-residue protein sequence, read N- to C-terminus: MKTNYEIRYAAHPEDARSYDTKRIRRDFLIEKVFSADEVNMVYSMYDRMVVGGAMPVKEVLKLEAIDPLKAPYFLTRREMGIFNVGGPGVVRAGDAIFQLDYKEALYLGAGDRDVTFESTDAAHPAKFYFNSLAAHRNYPDKKVTKADAVVAEMGTLEGSNHRNINKMLVNQVLPTCQLQMGMTELAPGSVWNTMPAHVHSRRMEAYFYFEVPEEHAVCHFMGEVDETRHVWMKGDQAVLSPEWSIHSAAATHNYTFIWGMGGENLDYGDQDFSLITDLK.

Zn(2+)-binding residues include His198, His200, Glu205, and His247.

This sequence belongs to the KduI family. It depends on Zn(2+) as a cofactor.

The catalysed reaction is 5-dehydro-4-deoxy-D-glucuronate = 3-deoxy-D-glycero-2,5-hexodiulosonate. It functions in the pathway glycan metabolism; pectin degradation; 2-dehydro-3-deoxy-D-gluconate from pectin: step 4/5. In terms of biological role, catalyzes the isomerization of 5-dehydro-4-deoxy-D-glucuronate to 3-deoxy-D-glycero-2,5-hexodiulosonate. The chain is 4-deoxy-L-threo-5-hexosulose-uronate ketol-isomerase from Bacteroides fragilis (strain ATCC 25285 / DSM 2151 / CCUG 4856 / JCM 11019 / LMG 10263 / NCTC 9343 / Onslow / VPI 2553 / EN-2).